The following is a 359-amino-acid chain: Dual-specificity RNA methyltransferase RlmN (359 aa).

Glu102 (proton acceptor) is an active-site residue. Residues 108–351 (EKKRATLCIS…IRKNRGSDIQ (244 aa)) enclose the Radical SAM core domain. A disulfide bridge links Cys115 with Cys354. [4Fe-4S] cluster is bound by residues Cys122, Cys126, and Cys129. S-adenosyl-L-methionine-binding positions include 178-179 (GE), Ser210, 232-234 (SLH), and Asn311. The active-site S-methylcysteine intermediate is the Cys354.

It belongs to the radical SAM superfamily. RlmN family. The cofactor is [4Fe-4S] cluster.

The protein localises to the cytoplasm. It catalyses the reaction adenosine(2503) in 23S rRNA + 2 reduced [2Fe-2S]-[ferredoxin] + 2 S-adenosyl-L-methionine = 2-methyladenosine(2503) in 23S rRNA + 5'-deoxyadenosine + L-methionine + 2 oxidized [2Fe-2S]-[ferredoxin] + S-adenosyl-L-homocysteine. The catalysed reaction is adenosine(37) in tRNA + 2 reduced [2Fe-2S]-[ferredoxin] + 2 S-adenosyl-L-methionine = 2-methyladenosine(37) in tRNA + 5'-deoxyadenosine + L-methionine + 2 oxidized [2Fe-2S]-[ferredoxin] + S-adenosyl-L-homocysteine. Its function is as follows. Specifically methylates position 2 of adenine 2503 in 23S rRNA and position 2 of adenine 37 in tRNAs. m2A2503 modification seems to play a crucial role in the proofreading step occurring at the peptidyl transferase center and thus would serve to optimize ribosomal fidelity. The polypeptide is Dual-specificity RNA methyltransferase RlmN (Buchnera aphidicola subsp. Cinara cedri (strain Cc)).